The primary structure comprises 230 residues: ATP-dependent dethiobiotin synthetase BioD (230 aa).

12–17 (DVGKTV) is a binding site for ATP. T16 is a Mg(2+) binding site. The active site involves K37. T41 is a substrate binding site. ATP-binding positions include D49, 108–111 (EGAG), 168–169 (GS), and 198–200 (PEG). Residues D49 and E108 each coordinate Mg(2+).

The protein belongs to the dethiobiotin synthetase family. As to quaternary structure, homodimer. Requires Mg(2+) as cofactor.

It is found in the cytoplasm. It carries out the reaction (7R,8S)-7,8-diammoniononanoate + CO2 + ATP = (4R,5S)-dethiobiotin + ADP + phosphate + 3 H(+). Its pathway is cofactor biosynthesis; biotin biosynthesis; biotin from 7,8-diaminononanoate: step 1/2. Its function is as follows. Catalyzes a mechanistically unusual reaction, the ATP-dependent insertion of CO2 between the N7 and N8 nitrogen atoms of 7,8-diaminopelargonic acid (DAPA, also called 7,8-diammoniononanoate) to form a ureido ring. The sequence is that of ATP-dependent dethiobiotin synthetase BioD from Corynebacterium kroppenstedtii (strain DSM 44385 / JCM 11950 / CIP 105744 / CCUG 35717).